Here is a 338-residue protein sequence, read N- to C-terminus: MSTLRLLISDSYDPWFNLAVEECIFRQMPATQRVLFLWRNADTVVIGRAQNPWKECNTRRMEEDNVRLARRSSGGGAVFHDLGNTCFTFMAGKPEYDKTISTSIVLNALNALGVSAEASGRNDLVVKTAEGDRKVSGSAYRETKDRGFHHGTLLLNADLSRLANYLNPDKKKLAAKGITSVRSRVTNLTELLPGITHEQVCEAITEAFFAHYGEHVEAEIISPDKTPDLPNFAETFARQSSWEWNFGQAPAFSHLLDERFTWGGVELHFDVEKGHITRAQVFTDSLNPAPLEALAGRLQGCLYRADMLQQECEALLVDFPEQEKELRELSAWIAGAVR.

One can recognise a BPL/LPL catalytic domain in the interval 29–216; it reads PATQRVLFLW…AFFAHYGEHV (188 aa). ATP-binding positions include R71, 76-79, and K134; that span reads GAVF. K134 contacts (R)-lipoate.

The protein belongs to the LplA family. As to quaternary structure, monomer.

It localises to the cytoplasm. It carries out the reaction L-lysyl-[lipoyl-carrier protein] + (R)-lipoate + ATP = N(6)-[(R)-lipoyl]-L-lysyl-[lipoyl-carrier protein] + AMP + diphosphate + H(+). The protein operates within protein modification; protein lipoylation via exogenous pathway; protein N(6)-(lipoyl)lysine from lipoate: step 1/2. It participates in protein modification; protein lipoylation via exogenous pathway; protein N(6)-(lipoyl)lysine from lipoate: step 2/2. Catalyzes both the ATP-dependent activation of exogenously supplied lipoate to lipoyl-AMP and the transfer of the activated lipoyl onto the lipoyl domains of lipoate-dependent enzymes. The protein is Lipoate-protein ligase A of Escherichia coli O17:K52:H18 (strain UMN026 / ExPEC).